A 542-amino-acid polypeptide reads, in one-letter code: Sensor protein CitS (542 aa).

At 1 to 13 (MVKKRFHFSLQTK) the chain is on the cytoplasmic side. The helical transmembrane segment at 14 to 34 (IMGLIAALLVFVIGVLTITLA) threads the bilayer. Over 35-175 (VQHTQGERRQ…TEQSIKKHLR (141 aa)) the chain is Extracellular. Residues 176-196 (NLSVIAVLVLLLGFIGAAVLA) traverse the membrane as a helical segment. Residues 197–542 (KSIRKDTLGL…PFDSHRDCGG (346 aa)) lie on the Cytoplasmic side of the membrane. Residues 216–279 (RERNAMLFAI…MSVLEKGEML (64 aa)) form the PAS domain. A Histidine kinase domain is found at 336–528 (AQTHEFSNKL…VFTVFIPKEK (193 aa)). His339 is modified (phosphohistidine; by autocatalysis).

It localises to the cell membrane. The catalysed reaction is ATP + protein L-histidine = ADP + protein N-phospho-L-histidine.. Functionally, member of the two-component regulatory system CitT/CitS. Regulates the expression of the citM-yflN operon. Functions probably as a membrane-associated protein kinase that phosphorylates CitT in response to environmental citrate or Mg(2+)-citrate complex. In Bacillus subtilis (strain 168), this protein is Sensor protein CitS (citS).